A 241-amino-acid chain; its full sequence is Cobalt transport protein CbiM (241 aa).

Residues Met-1–Ala-24 form the signal peptide. A run of 6 helical transmembrane segments spans residues Gly-30–Gly-50, Leu-67–Val-87, Leu-99–Phe-119, Thr-131–Phe-151, Ser-160–Leu-180, and Gly-202–Val-222.

Belongs to the CbiM family. As to quaternary structure, forms an energy-coupling factor (ECF) transporter complex composed of an ATP-binding protein (A component, CbiO), a transmembrane protein (T component, CbiQ) and 2 possible substrate-capture proteins (S components, CbiM and CbiN) of unknown stoichimetry.

It is found in the cell membrane. It participates in cofactor biosynthesis; adenosylcobalamin biosynthesis. In terms of biological role, part of the energy-coupling factor (ECF) transporter complex CbiMNOQ involved in cobalt import. The protein is Cobalt transport protein CbiM of Acetoanaerobium sticklandii (strain ATCC 12662 / DSM 519 / JCM 1433 / CCUG 9281 / NCIMB 10654 / HF) (Clostridium sticklandii).